Consider the following 257-residue polypeptide: UPF0246 protein YaaA (257 aa).

Belongs to the UPF0246 family.

This is UPF0246 protein YaaA from Salmonella schwarzengrund (strain CVM19633).